Reading from the N-terminus, the 132-residue chain is Small ribosomal subunit protein uS8 (132 aa).

The protein belongs to the universal ribosomal protein uS8 family. In terms of assembly, part of the 30S ribosomal subunit. Contacts proteins S5 and S12.

Its function is as follows. One of the primary rRNA binding proteins, it binds directly to 16S rRNA central domain where it helps coordinate assembly of the platform of the 30S subunit. The polypeptide is Small ribosomal subunit protein uS8 (Azorhizobium caulinodans (strain ATCC 43989 / DSM 5975 / JCM 20966 / LMG 6465 / NBRC 14845 / NCIMB 13405 / ORS 571)).